Consider the following 481-residue polypeptide: Glutamyl-tRNA(Gln) amidotransferase subunit A (481 aa).

Catalysis depends on charge relay system residues K76 and S151. S175 (acyl-ester intermediate) is an active-site residue.

Belongs to the amidase family. GatA subfamily. In terms of assembly, heterotrimer of A, B and C subunits.

It catalyses the reaction L-glutamyl-tRNA(Gln) + L-glutamine + ATP + H2O = L-glutaminyl-tRNA(Gln) + L-glutamate + ADP + phosphate + H(+). In terms of biological role, allows the formation of correctly charged Gln-tRNA(Gln) through the transamidation of misacylated Glu-tRNA(Gln) in organisms which lack glutaminyl-tRNA synthetase. The reaction takes place in the presence of glutamine and ATP through an activated gamma-phospho-Glu-tRNA(Gln). The polypeptide is Glutamyl-tRNA(Gln) amidotransferase subunit A (Neisseria meningitidis serogroup C / serotype 2a (strain ATCC 700532 / DSM 15464 / FAM18)).